A 400-amino-acid polypeptide reads, in one-letter code: Tryptophan synthase beta chain (400 aa).

Residue lysine 92 is modified to N6-(pyridoxal phosphate)lysine.

It belongs to the TrpB family. In terms of assembly, tetramer of two alpha and two beta chains. It depends on pyridoxal 5'-phosphate as a cofactor.

It catalyses the reaction (1S,2R)-1-C-(indol-3-yl)glycerol 3-phosphate + L-serine = D-glyceraldehyde 3-phosphate + L-tryptophan + H2O. It participates in amino-acid biosynthesis; L-tryptophan biosynthesis; L-tryptophan from chorismate: step 5/5. Functionally, the beta subunit is responsible for the synthesis of L-tryptophan from indole and L-serine. The chain is Tryptophan synthase beta chain from Neisseria meningitidis serogroup A / serotype 4A (strain DSM 15465 / Z2491).